The chain runs to 219 residues: Protein-L-isoaspartate O-methyltransferase 2 (219 aa).

S60 is an active-site residue.

Belongs to the methyltransferase superfamily. L-isoaspartyl/D-aspartyl protein methyltransferase family.

It localises to the cytoplasm. The enzyme catalyses [protein]-L-isoaspartate + S-adenosyl-L-methionine = [protein]-L-isoaspartate alpha-methyl ester + S-adenosyl-L-homocysteine. Its function is as follows. Catalyzes the methyl esterification of L-isoaspartyl residues in peptides and proteins that result from spontaneous decomposition of normal L-aspartyl and L-asparaginyl residues. It plays a role in the repair and/or degradation of damaged proteins. This Archaeoglobus fulgidus (strain ATCC 49558 / DSM 4304 / JCM 9628 / NBRC 100126 / VC-16) protein is Protein-L-isoaspartate O-methyltransferase 2 (pcm2).